Consider the following 357-residue polypeptide: Peptide chain release factor 1 (357 aa).

Gln234 is subject to N5-methylglutamine.

This sequence belongs to the prokaryotic/mitochondrial release factor family. In terms of processing, methylated by PrmC. Methylation increases the termination efficiency of RF1.

Its subcellular location is the cytoplasm. In terms of biological role, peptide chain release factor 1 directs the termination of translation in response to the peptide chain termination codons UAG and UAA. This chain is Peptide chain release factor 1 (prfA), found in Lactococcus lactis subsp. lactis (strain IL1403) (Streptococcus lactis).